The primary structure comprises 679 residues: Protein hook (679 aa).

One can recognise a Calponin-homology (CH) domain in the interval asparagine 6 to alanine 123. Coiled coils occupy residues glutamate 135–glycine 437 and glutamine 480–leucine 574.

This sequence belongs to the hook family. As to quaternary structure, homodimer. Interacts with microtubules via its N-terminus.

Its subcellular location is the cytoplasm. The protein localises to the cytoskeleton. The protein resides in the endosome. It localises to the synapse. Functionally, involved in endocytic trafficking by stabilizing organelles of the endocytic pathway. Probably acts as a cytoskeletal linker protein required to tether endosome vesicles to the cytoskeleton. Involved in modulation of endocytosis at stages required for down-regulation of membrane proteins that control synapse size. Not involved in synaptic vesicle recycling. Required in R7 cells for boss endocytosis into multivesicular bodies (MVBs). Has a role in regulating adult longevity. In Drosophila yakuba (Fruit fly), this protein is Protein hook.